We begin with the raw amino-acid sequence, 97 residues long: Kininogen-1 (97 aa).

Positions 1 to 23 are cleaved as a signal peptide; the sequence is MRLWFCLSFLIILCVEHFPGTLA.

The protein belongs to the bradykinin-related peptide family. As to expression, expressed by the skin glands.

It localises to the secreted. Its function is as follows. [Ala3,Thr6]bradykinin: produces in vitro relaxation of rat arterial smooth muscle and constriction of intestinal smooth muscle. Possesses insulin-releasing activity. May target bradykinin receptors (BDKRB). This Bombina variegata (Yellow-bellied toad) protein is Kininogen-1.